A 542-amino-acid chain; its full sequence is Doublesex- and mab-3-related transcription factor A2 (542 aa).

A DNA-binding region (DM) is located at residues 70-117; that stretch reads CARCRNHGVVSALKGHKRYCRWKDCLCAKCTLIAERQRVMAAQVALRR. Positions 201–316 are disordered; sequence LQAGRPGSPL…GGSGPRQRTP (116 aa). Positions 314 to 349 constitute a DMA domain; the sequence is RTPLDILTRVFPGHRRGVLELVLQGCGGDVVQAIEQ.

Belongs to the DMRT family. In terms of tissue distribution, expressed in testis.

It localises to the nucleus. Functionally, may be involved in sexual development. This chain is Doublesex- and mab-3-related transcription factor A2 (DMRTA2), found in Homo sapiens (Human).